Reading from the N-terminus, the 317-residue chain is Olfactory receptor 10AD1 (317 aa).

Topologically, residues 1 to 25 are extracellular; the sequence is MLRNGSIVTEFILVGFQQSSTSTRA. An N-linked (GlcNAc...) asparagine glycan is attached at Asn-4. A helical transmembrane segment spans residues 26–46; that stretch reads LLFALFLALYSLTMAMNGLII. Residues 47–55 lie on the Cytoplasmic side of the membrane; it reads FITSWTDPK. The helical transmembrane segment at 56-76 threads the bilayer; it reads LNSPMYFFLGHLSLLDVCFIT. Residues 77 to 100 are Extracellular-facing; that stretch reads TTIPQMLIHLVVRDHIVSFVCCMT. Cys-98 and Cys-190 are joined by a disulfide. A helical transmembrane segment spans residues 101–121; the sequence is QMYFVFCVGVAECILLAFMAY. The Cytoplasmic segment spans residues 122-140; sequence DRYVAICYPLNYVPIISQK. A helical transmembrane segment spans residues 141–161; that stretch reads VCVRLVGTAWFFGLINGIFLE. The Extracellular portion of the chain corresponds to 162–198; that stretch reads YISFREPFRRDNHIESFFCEAPIVIGLSCGDPQFSLW. A helical membrane pass occupies residues 199 to 218; the sequence is AIFADAIVVILSPMVLTVTS. The Cytoplasmic portion of the chain corresponds to 219-238; it reads YVHILATILSKASSSGRGKT. The chain crosses the membrane as a helical span at residues 239 to 259; that stretch reads FSTCASHLTVVIFLYTSAMFS. At 260-272 the chain is on the extracellular side; that stretch reads YMNPHSTHGPDKD. Residues 273–293 traverse the membrane as a helical segment; that stretch reads KPFSLLYTIITPMCNPIIYSF. The Cytoplasmic segment spans residues 294–317; that stretch reads RNKEIKEAMVRALGRTRLAQPQSV.

It belongs to the G-protein coupled receptor 1 family.

It is found in the cell membrane. Functionally, odorant receptor. The sequence is that of Olfactory receptor 10AD1 (OR10AD1) from Homo sapiens (Human).